Consider the following 179-residue polypeptide: Large ribosomal subunit protein uL5 (179 aa).

It belongs to the universal ribosomal protein uL5 family. As to quaternary structure, part of the 50S ribosomal subunit; part of the 5S rRNA/L5/L18/L25 subcomplex. Contacts the 5S rRNA and the P site tRNA. Forms a bridge to the 30S subunit in the 70S ribosome.

Functionally, this is one of the proteins that bind and probably mediate the attachment of the 5S RNA into the large ribosomal subunit, where it forms part of the central protuberance. In the 70S ribosome it contacts protein S13 of the 30S subunit (bridge B1b), connecting the 2 subunits; this bridge is implicated in subunit movement. Contacts the P site tRNA; the 5S rRNA and some of its associated proteins might help stabilize positioning of ribosome-bound tRNAs. The chain is Large ribosomal subunit protein uL5 from Bacillus cereus (strain 03BB102).